A 67-amino-acid polypeptide reads, in one-letter code: Probable Sec-independent protein translocase protein TatE (67 aa).

A helical transmembrane segment spans residues 4–21 (ISITKLLVIAALVVLLFG). Residues 44 to 67 (NDDDTGAKTPAASEAPAERLSHKE) are disordered.

The protein belongs to the TatA/E family. TatE subfamily.

The protein resides in the cell inner membrane. Functionally, part of the twin-arginine translocation (Tat) system that transports large folded proteins containing a characteristic twin-arginine motif in their signal peptide across membranes. TatE shares overlapping functions with TatA. The protein is Probable Sec-independent protein translocase protein TatE of Cronobacter sakazakii (strain ATCC BAA-894) (Enterobacter sakazakii).